The sequence spans 474 residues: MADIKDYKFWFVTGSQFLYGPEVLKQVEEDSKKIIEKLNESGNLPYPIEFKTVGVTAENITEAMKEANYDDSVAGVITWAHTFSPAKNWIRGTQLLNKPLLHLATQMLNNIPYDSIDFDYMNLNQSAHGDREYAFINARLRLNNKIVFGHWADEAVQVQIGKWMDVAVAYEESFKIKVVTFADKMRNVAVTDGDKIEAQIKFGWTVDYWGVGDLVTYVNAIDDADIDNLYIELQDKYDFVAGQNDSEKYEHNVKYQLREYLGIKRFLTDKGYSAFTTNFEDLVGLEQLPGLAAQLLMADGFGFAGEGDWKTAALTRLLKIVSHNQATAFMEDYTLDLRQGHEAILGSHMLEVDPTIASDKPRVEVHPLGIGGKEDPARLVFSGRTGDAVDVTISDFGDEFKLISYDVTGNKPEAETPYLPVAKQLWTPKAGLKAGAEGWLTVGGGHHTTLSFSVDSEQLTDLANLFGVTYVDIK.

Positions 306, 331, 348, and 447 each coordinate Mn(2+).

The protein belongs to the arabinose isomerase family. Mn(2+) is required as a cofactor.

It carries out the reaction beta-L-arabinopyranose = L-ribulose. It functions in the pathway carbohydrate degradation; L-arabinose degradation via L-ribulose; D-xylulose 5-phosphate from L-arabinose (bacterial route): step 1/3. Catalyzes the conversion of L-arabinose to L-ribulose. In Leuconostoc mesenteroides subsp. mesenteroides (strain ATCC 8293 / DSM 20343 / BCRC 11652 / CCM 1803 / JCM 6124 / NCDO 523 / NBRC 100496 / NCIMB 8023 / NCTC 12954 / NRRL B-1118 / 37Y), this protein is L-arabinose isomerase.